We begin with the raw amino-acid sequence, 161 residues long: Phosphopantetheine adenylyltransferase (161 aa).

Ser-11 provides a ligand contact to substrate. ATP contacts are provided by residues 11–12 (SF) and His-19. The substrate site is built by Lys-43, Leu-75, and Arg-89. Residues 90–92 (GLR), Glu-100, and 125–131 (YSFISSS) each bind ATP.

Belongs to the bacterial CoaD family. As to quaternary structure, homohexamer. Mg(2+) serves as cofactor.

The protein localises to the cytoplasm. The enzyme catalyses (R)-4'-phosphopantetheine + ATP + H(+) = 3'-dephospho-CoA + diphosphate. It participates in cofactor biosynthesis; coenzyme A biosynthesis; CoA from (R)-pantothenate: step 4/5. In terms of biological role, reversibly transfers an adenylyl group from ATP to 4'-phosphopantetheine, yielding dephospho-CoA (dPCoA) and pyrophosphate. The protein is Phosphopantetheine adenylyltransferase of Staphylococcus haemolyticus (strain JCSC1435).